Consider the following 290-residue polypeptide: Cbb3-type cytochrome c oxidase subunit CcoP (290 aa).

The tract at residues 1-22 (MSVKPTKQKPGEPPTTGHSWDG) is disordered. Residues 1-37 (MSVKPTKQKPGEPPTTGHSWDGIEEFDNPMPRWWLWT) lie on the Cytoplasmic side of the membrane. Residues 38-58 (FYVTIVWAIGYSILYPAWPLI) form a helical membrane-spanning segment. At 59–290 (NGATNGLIGH…VYVHGLGGGE (232 aa)) the chain is on the periplasmic side. Cytochrome c domains are found at residues 109–199 (YATN…LQIS) and 206–287 (ALSA…HGLG). Cys-122, Cys-125, His-126, Met-174, Cys-219, Cys-222, His-223, and Met-264 together coordinate heme c.

The protein belongs to the CcoP / FixP family. In terms of assembly, component of the cbb3-type cytochrome c oxidase at least composed of CcoN, CcoO, CcoQ and CcoP. Heme c serves as cofactor.

The protein resides in the cell inner membrane. It participates in energy metabolism; oxidative phosphorylation. Functionally, C-type cytochrome. Part of the cbb3-type cytochrome c oxidase complex. CcoP subunit is required for transferring electrons from donor cytochrome c via its heme groups to CcoO subunit. From there, electrons are shuttled to the catalytic binuclear center of CcoN subunit where oxygen reduction takes place. The complex also functions as a proton pump. This Cereibacter sphaeroides (strain ATCC 17023 / DSM 158 / JCM 6121 / CCUG 31486 / LMG 2827 / NBRC 12203 / NCIMB 8253 / ATH 2.4.1.) (Rhodobacter sphaeroides) protein is Cbb3-type cytochrome c oxidase subunit CcoP.